The sequence spans 130 residues: Fluoride-specific ion channel FluC 2 (130 aa).

Transmembrane regions (helical) follow at residues 4–24, 38–58, 72–92, and 103–123; these read GLST…GAIC, NLWG…FFLA, LYLL…SLIL, and WMEL…FISL. G82 and S85 together coordinate Na(+).

Belongs to the fluoride channel Fluc/FEX (TC 1.A.43) family.

The protein localises to the cell inner membrane. The enzyme catalyses fluoride(in) = fluoride(out). Its activity is regulated as follows. Na(+) is not transported, but it plays an essential structural role and its presence is essential for fluoride channel function. Fluoride-specific ion channel. Important for reducing fluoride concentration in the cell, thus reducing its toxicity. The chain is Fluoride-specific ion channel FluC 2 from Prochlorococcus marinus (strain SARG / CCMP1375 / SS120).